The primary structure comprises 183 residues: Outer membrane protein H.8 (183 aa).

A signal peptide spans 1-17 (MKAYLALISAAVIGLAA). Residue Cys18 is the site of N-palmitoyl cysteine attachment. Cys18 carries the S-diacylglycerol cysteine lipid modification. Positions 27 to 51 (AEATPAGEAPASEAPAAEAAPADAA) are disordered. The Plastocyanin-like domain maps to 57-183 (GNCAATVESN…LMNGKVTLVD (127 aa)). His102, Cys166, His171, and Met175 together coordinate Cu cation.

The cofactor is Cu cation.

The protein resides in the cell outer membrane. This Neisseria gonorrhoeae protein is Outer membrane protein H.8.